A 1159-amino-acid chain; its full sequence is ATP-dependent helicase/deoxyribonuclease subunit B (1159 aa).

Belongs to the helicase family. AddB/RexB type 2 subfamily. As to quaternary structure, heterodimer of AddA and RexB. It depends on Mg(2+) as a cofactor.

Its function is as follows. The heterodimer acts as both an ATP-dependent DNA helicase and an ATP-dependent, dual-direction single-stranded exonuclease. Recognizes the chi site generating a DNA molecule suitable for the initiation of homologous recombination. This subunit has 5' -&gt; 3' nuclease activity but not helicase activity. The polypeptide is ATP-dependent helicase/deoxyribonuclease subunit B (Leuconostoc mesenteroides subsp. mesenteroides (strain ATCC 8293 / DSM 20343 / BCRC 11652 / CCM 1803 / JCM 6124 / NCDO 523 / NBRC 100496 / NCIMB 8023 / NCTC 12954 / NRRL B-1118 / 37Y)).